The primary structure comprises 170 residues: Nucleoside-triphosphatase THEP1 (170 aa).

Residues 7 to 14 (GMPGVGKT) and 98 to 105 (IIIIDELG) contribute to the ATP site.

This sequence belongs to the THEP1 NTPase family.

It catalyses the reaction a ribonucleoside 5'-triphosphate + H2O = a ribonucleoside 5'-diphosphate + phosphate + H(+). Its function is as follows. Has nucleotide phosphatase activity towards ATP, GTP, CTP, TTP and UTP. May hydrolyze nucleoside diphosphates with lower efficiency. This is Nucleoside-triphosphatase THEP1 from Methanocaldococcus jannaschii (strain ATCC 43067 / DSM 2661 / JAL-1 / JCM 10045 / NBRC 100440) (Methanococcus jannaschii).